Consider the following 173-residue polypeptide: Development-specific protein S (173 aa).

Beta/gamma crystallin 'Greek key' domains lie at 2–46 and 48–86; these read ANIT…KVPP and VKAILYQNDGFAGDQIEVVANAEELGPLNNNVSSIRVIS. Tyrosine 8, asparagine 37, threonine 38, serine 40, glutamine 54, asparagine 77, asparagine 78, and serine 80 together coordinate Ca(2+). The segment at 87–90 is connecting peptide; sequence VPVQ. Beta/gamma crystallin 'Greek key' domains lie at 91–135 and 136–173; these read PRAR…KPQG and LAVVLFKNDNFSGDTLPVNSDAPTLGAMNNNTSSIRIS.

The protein belongs to the beta/gamma-crystallin family.

Protein S, induced in large amounts during fruiting body formation, assembles on the surface of myxospores in the presence of calcium ions. The polypeptide is Development-specific protein S (tps) (Myxococcus xanthus).